The sequence spans 167 residues: Protein-export protein SecB (167 aa).

Residues 1-20 (MASNDDAPVGAANGNGNTGA) are disordered.

It belongs to the SecB family. Homotetramer, a dimer of dimers. One homotetramer interacts with 1 SecA dimer.

Its subcellular location is the cytoplasm. One of the proteins required for the normal export of preproteins out of the cell cytoplasm. It is a molecular chaperone that binds to a subset of precursor proteins, maintaining them in a translocation-competent state. It also specifically binds to its receptor SecA. The protein is Protein-export protein SecB of Mesorhizobium japonicum (strain LMG 29417 / CECT 9101 / MAFF 303099) (Mesorhizobium loti (strain MAFF 303099)).